Consider the following 113-residue polypeptide: MEDFQASEETAFVVDEVSNIVKEAIESAIGGNAYQHSKVNQWTTNVVEQTLSQLTKLGKPFKYIVTCVIMQKNGAGLHTASSCFWDSSTDGSCTVRWENKTMYCIVSAFGLSI.

The residue at position 1 (M1) is an N-acetylmethionine. The interval 41–113 (QWTTNVVEQT…CIVSAFGLSI (73 aa)) is interaction with GNB1.

It belongs to the dynein light chain Tctex-type family. In terms of assembly, homodimer. The cytoplasmic dynein 1 complex consists of two catalytic heavy chains (HCs) and a number of non-catalytic subunits presented by intermediate chains (ICs), light intermediate chains (LICs) and light chains (LCs); the composition seems to vary in respect to the IC, LIC and LC composition. The heavy chain homodimer serves as a scaffold for the probable homodimeric assembly of the respective non-catalytic subunits. The ICs and LICs bind directly to the HC dimer and dynein LCs assemble on the IC dimer. DYNLT1 and DYNLT3 compete for association with dynein IC (DYNC1I1 or DYNC1I2). Self-associates. Interacts with RHO. Interacts with DYNC1I1 and DYNC1I2. Interacts with DOC2A, DOC2B and SCN10A. Interacts with PVR. Interacts with SVIL isoform 2. Interacts with GNB1; the interaction occurs in presence of guanine nucleotide-binding protein G(T) subunit gamma; the interaction diminishes the association of DYNLT1 with dynein IC (DYNC1I1 or DYNC1I2). Interacts with GNB2, GNB3 and GNB5; the interactions occur in presence of guanine nucleotide-binding protein G(T) subunit gamma. Interacts with ACVR2B and ARHGEF2. Interacts with DNAI4. Interacts with CFAP61. Post-translationally, phosphorylated by BMPR2. The phosphorylation status is proposed to regulate the association with the cytoplasmic dynein complex and may have role in cytoplasmic dynein cargo release.

It localises to the golgi apparatus. The protein resides in the cytoplasm. It is found in the cytoskeleton. The protein localises to the spindle. In terms of biological role, acts as one of several non-catalytic accessory components of the cytoplasmic dynein 1 complex that are thought to be involved in linking dynein to cargos and to adapter proteins that regulate dynein function. Cytoplasmic dynein 1 acts as a motor for the intracellular retrograde motility of vesicles and organelles along microtubules. Binds to transport cargos and is involved in apical cargo transport such as rhodopsin-bearing vesicles in polarized epithelia. Is involved in intracellular targeting of D-type retrovirus gag polyproteins to the cytoplasmic assembly site. May also be a accessory component of axonemal dynein. Its function is as follows. Plays a role in neuronal morphogenesis; the function is independent of cytoplasmic dynein and seems to be coupled to regulation of the actin cytoskeleton by enhancing Rac1 activity. Required for neurite outgrowth. The function in neurogenesis may be regulated by association with a G-protein beta-gamma dimer. May function as a receptor-independent activator of heterotrimeric G-protein signaling; the activation appears to be independent of a nucleotide exchange. Plays a role in regulating neurogenesis; inhibits the genesis of neurons from precursor cells during cortical development presumably by antagonizing ARHGEF2. Unrelated to the role in retrograde microtubule-associated movement may play a role in the dimerization of cytoplasmic proteins/domains such as for ACVR2B. Binds to the cytoplasmic domain of ACVR2B and, in vitro, inhibits ACVR2B signaling. Involved in the regulation of mitotic spindle orientation. The sequence is that of Dynein light chain Tctex-type 1 (Dynlt1) from Rattus norvegicus (Rat).